The sequence spans 71 residues: Small ribosomal subunit protein bS21 (71 aa).

This sequence belongs to the bacterial ribosomal protein bS21 family.

In Shewanella sp. (strain MR-4), this protein is Small ribosomal subunit protein bS21.